The following is a 312-amino-acid chain: Putative S-adenosyl-L-methionine-dependent methyltransferase Mkms_0097 (312 aa).

S-adenosyl-L-methionine contacts are provided by residues aspartate 134 and 163–164 (DL).

This sequence belongs to the UPF0677 family.

Functionally, exhibits S-adenosyl-L-methionine-dependent methyltransferase activity. The protein is Putative S-adenosyl-L-methionine-dependent methyltransferase Mkms_0097 of Mycobacterium sp. (strain KMS).